Reading from the N-terminus, the 41-residue chain is Replication-associated protein (41 aa).

In terms of biological role, involved in viral RNA replication. This chain is Replication-associated protein, found in Potato leafroll virus (strain Potato/Scotland/strain 1/1984) (PLrV).